A 130-amino-acid chain; its full sequence is Large ribosomal subunit protein bL17 (130 aa).

Belongs to the bacterial ribosomal protein bL17 family. As to quaternary structure, part of the 50S ribosomal subunit. Contacts protein L32.

This chain is Large ribosomal subunit protein bL17, found in Nitrosomonas europaea (strain ATCC 19718 / CIP 103999 / KCTC 2705 / NBRC 14298).